The following is a 290-amino-acid chain: Acetylglutamate kinase (290 aa).

Residues 65–66 (GG), R87, and N186 contribute to the substrate site.

This sequence belongs to the acetylglutamate kinase family. ArgB subfamily.

It is found in the cytoplasm. It carries out the reaction N-acetyl-L-glutamate + ATP = N-acetyl-L-glutamyl 5-phosphate + ADP. Its pathway is amino-acid biosynthesis; L-arginine biosynthesis; N(2)-acetyl-L-ornithine from L-glutamate: step 2/4. Its function is as follows. Catalyzes the ATP-dependent phosphorylation of N-acetyl-L-glutamate. The protein is Acetylglutamate kinase of Mycolicibacterium gilvum (strain PYR-GCK) (Mycobacterium gilvum (strain PYR-GCK)).